Consider the following 429-residue polypeptide: Enolase (429 aa).

Q163 is a (2R)-2-phosphoglycerate binding site. The active-site Proton donor is the E205. Residues D242, E287, and D314 each contribute to the Mg(2+) site. The (2R)-2-phosphoglycerate site is built by K339, R368, S369, and K390. The active-site Proton acceptor is K339.

This sequence belongs to the enolase family. The cofactor is Mg(2+).

The protein resides in the cytoplasm. It localises to the secreted. The protein localises to the cell surface. It catalyses the reaction (2R)-2-phosphoglycerate = phosphoenolpyruvate + H2O. It participates in carbohydrate degradation; glycolysis; pyruvate from D-glyceraldehyde 3-phosphate: step 4/5. Its function is as follows. Catalyzes the reversible conversion of 2-phosphoglycerate (2-PG) into phosphoenolpyruvate (PEP). It is essential for the degradation of carbohydrates via glycolysis. This Anaeromyxobacter sp. (strain Fw109-5) protein is Enolase.